The primary structure comprises 239 residues: MKNDVISPEFDENGRPLRRIRSFVRRQGRLTKGQEHALENYWPVMGVEFSEAPVDFATLFGREAPVTLEIGFGMGASLVAMAKARPEQNFLGIEVHSPGVGACLASAHEEGVENLHVMCHDAVEVLHKMIPDNSLSMVQLFFPDPWHKARHNKRRIVQVPFAELVLSKLKLGGVFHMATDWEAYAEHMLEVMSSIDGYKNLSESNDYVPRPESRPVTKFEQRGHRLGHGVWDLMFERVK.

The S-adenosyl-L-methionine site is built by Glu-69, Glu-94, Asp-121, and Asp-144. Asp-144 is an active-site residue. Lys-148 provides a ligand contact to substrate. The interval 150-155 (RHNKRR) is interaction with RNA. Substrate is bound by residues Asp-180 and 217 to 220 (TKFE).

It belongs to the class I-like SAM-binding methyltransferase superfamily. TrmB family. As to quaternary structure, monomer.

It carries out the reaction guanosine(46) in tRNA + S-adenosyl-L-methionine = N(7)-methylguanosine(46) in tRNA + S-adenosyl-L-homocysteine. Its pathway is tRNA modification; N(7)-methylguanine-tRNA biosynthesis. In terms of biological role, catalyzes the formation of N(7)-methylguanine at position 46 (m7G46) in tRNA. In Salmonella typhi, this protein is tRNA (guanine-N(7)-)-methyltransferase.